The sequence spans 301 residues: Growth-regulating factor 2 (301 aa).

The QLQ domain occupies 11 to 46; the sequence is LFTATQWQELEHQALIYKYMAAGAPVPPDLLLHLRH. 2 consecutive short sequence motifs (bipartite nuclear localization signal) follow at residues 83 to 102 and 120 to 127; these read RRVEDPEPGRCRRTDGKKWR and RGKNRSRK. One can recognise a WRC domain in the interval 87–131; it reads DPEPGRCRRTDGKKWRCSREAYGESKYCEKHMHRGKNRSRKPVEM.

The protein belongs to the GRF family.

It is found in the nucleus. Transcription activator that plays a regulatory role in gibberellin-induced stem elongation. The chain is Growth-regulating factor 2 (GRF2) from Oryza sativa subsp. japonica (Rice).